We begin with the raw amino-acid sequence, 537 residues long: Mitochondrial distribution and morphology protein 34 (537 aa).

The region spanning 1–195 (MAFNFNWSPL…LPAIIHRLSL (195 aa)) is the SMP-LTD domain. Disordered regions lie at residues 320–339 (YTFSDNGSQDQGSLPSRPSL), 348–403 (GLSL…IMPH), 421–493 (GRSP…DTSS), and 516–537 (KNGNPTFWDDQDDTPPPAYEAR). The span at 355-371 (RHSKAGRKKKTRVVNLR) shows a compositional bias: basic residues. The segment covering 378–391 (ANSEEEEDTPETDS) has biased composition (acidic residues). The span at 425 to 441 (DLQQQPRRPSFRAQATN) shows a compositional bias: polar residues.

It belongs to the MDM34 family. As to quaternary structure, component of the ER-mitochondria encounter structure (ERMES) or MDM complex, composed of MMM1, MDM10, MDM12 and MDM34.

The protein localises to the mitochondrion outer membrane. Component of the ERMES/MDM complex, which serves as a molecular tether to connect the endoplasmic reticulum (ER) and mitochondria. Components of this complex are involved in the control of mitochondrial shape and protein biogenesis, and function in nonvesicular lipid trafficking between the ER and mitochondria. MDM34 is required for the interaction of the ER-resident membrane protein MMM1 and the outer mitochondrial membrane-resident beta-barrel protein MDM10. The polypeptide is Mitochondrial distribution and morphology protein 34 (Chaetomium globosum (strain ATCC 6205 / CBS 148.51 / DSM 1962 / NBRC 6347 / NRRL 1970) (Soil fungus)).